Here is a 212-residue protein sequence, read N- to C-terminus: F-box protein GID2 (212 aa).

The disordered stretch occupies residues 1-74 (MKFRSDSSGG…AGEGEQPRVP (74 aa)). Positions 35-59 (DPSSSSSQGEASSSSQPPPQQQQEE) are enriched in low complexity. The region spanning 70-116 (QPRVPDLGEDLVFEVLRRAEARTLAAAACVSRGWRQLAEDERLWEAA) is the F-box domain.

Part of some SCF(GID2) complex, which consist of a SKP1 protein, CUL1, GID2 and some RING box protein. Interacts directly with SKP2 and SKP15. Interacts directly with DELLA protein SLR1. May have a higher affinity for phosphorylated SLR1 proteins. Widely expressed. Preferentially expressed in unopened flowers, shoot apices and elongation stem. Expressed at lower level in the leaf blades, leaf sheaths, roots and rachis.

It localises to the nucleus. The protein operates within protein modification; protein ubiquitination. Its function is as follows. Essential component of some SCF-type E3 ligase complex that positively regulates the gibberellin signaling pathway. Upon gibberellin treatment, the complex mediates the ubiquitination and subsequent degradation of DELLA protein SLR1, a repressor of the gibberellin pathway, leading to activate the pathway. This is F-box protein GID2 (GID2) from Oryza sativa subsp. japonica (Rice).